The following is a 515-amino-acid chain: Membrane-bound transcription factor site-2 protease (515 aa).

At 1–3 (MIP) the chain is on the cytoplasmic side. Residues 4-24 (VSLLVVVVGGWTAVYLADLVL) traverse the membrane as a helical segment. Topologically, residues 25-74 (KSSVYFKHSYEDWLENNGLSISPFHIRWQTSIFNRAFYSWGRRKARMLYQ) are lumenal. Transmembrane regions (helical) follow at residues 75 to 95 (WFNF…FLLG) and 96 to 107 (KTLMQTLAQMMA). The Lumenal portion of the chain corresponds to 108–140 (DSPSPYSSSSSSSSSSSSSSSSSSSLHNEQVLQ). The helical transmembrane segment at 141–165 (VVVPGINLPVNQLTYFFAAVLISGV) threads the bilayer. His167 contributes to the Zn(2+) binding site. Residue Glu168 is part of the active site. The next 3 membrane-spanning stretches (helical) occupy residues 170–182 (GHGI…QVRF), 183–205 (NGFG…TTHL), and 225–247 (FVLA…PFYY). Position 171 (His171) interacts with Zn(2+). Topologically, residues 248-442 (TGVGVLITEV…LPVIVETFVK (195 aa)) are lumenal. A glycan (N-linked (GlcNAc...) asparagine) is linked at Asn333. A run of 2 helical transmembrane segments spans residues 443-460 (YLIS…VPCF) and 461-472 (ALDGQWILNSFL). At 473–488 (DATLTSVIGDNDVKDL) the chain is on the lumenal side. The chain crosses the membrane as a helical span at residues 489-509 (IGFFILLGGSVLLAANVTLGL). The Cytoplasmic segment spans residues 510 to 515 (WMVTAR).

This sequence belongs to the peptidase M50A family. The cofactor is Zn(2+).

Its subcellular location is the membrane. It is found in the cytoplasm. The protein resides in the golgi apparatus membrane. It carries out the reaction Cleaves several transcription factors that are type-2 transmembrane proteins within membrane-spanning domains. Known substrates include sterol regulatory element-binding protein (SREBP) -1, SREBP-2 and forms of the transcriptional activator ATF6. SREBP-2 is cleaved at the site 477-DRSRILL-|-CVLTFLCLSFNPLTSLLQWGGA-505. The residues Asn-Pro, 11 residues distal to the site of cleavage in the membrane-spanning domain, are important for cleavage by S2P endopeptidase. Replacement of either of these residues does not prevent cleavage, but there is no cleavage if both of these residues are replaced.. Functionally, zinc metalloprotease that mediates intramembrane proteolysis of proteins such as ATF6, ATF6B, SREBF1/SREBP1 and SREBF2/SREBP2. Catalyzes the second step in the proteolytic activation of the sterol regulatory element-binding proteins (SREBPs) SREBF1/SREBP1 and SREBF2/SREBP2: cleaves SREBPs within the first transmembrane segment, thereby releasing the N-terminal segment with a portion of the transmembrane segment attached. Mature N-terminal SREBP fragments shuttle to the nucleus and activate gene transcription. Also mediates the second step in the proteolytic activation of the cyclic AMP-dependent transcription factor ATF-6 (ATF6 and ATF6B). Involved in intramembrane proteolysis during bone formation. In astrocytes and osteoblasts, upon DNA damage and ER stress, mediates the second step of the regulated intramembrane proteolytic activation of the transcription factor CREB3L1, leading to the inhibition of cell-cycle progression. The polypeptide is Membrane-bound transcription factor site-2 protease (Mbtps2) (Mus musculus (Mouse)).